A 201-amino-acid polypeptide reads, in one-letter code: Pyridoxal 5'-phosphate synthase subunit PdxT (201 aa).

Residue 51–53 (GES) coordinates L-glutamine. Catalysis depends on Cys-83, which acts as the Nucleophile. L-glutamine contacts are provided by residues Arg-112 and 141-142 (IR). Catalysis depends on charge relay system residues His-182 and Glu-184.

It belongs to the glutaminase PdxT/SNO family. As to quaternary structure, in the presence of PdxS, forms a dodecamer of heterodimers. Only shows activity in the heterodimer.

It catalyses the reaction aldehydo-D-ribose 5-phosphate + D-glyceraldehyde 3-phosphate + L-glutamine = pyridoxal 5'-phosphate + L-glutamate + phosphate + 3 H2O + H(+). It carries out the reaction L-glutamine + H2O = L-glutamate + NH4(+). Its pathway is cofactor biosynthesis; pyridoxal 5'-phosphate biosynthesis. Functionally, catalyzes the hydrolysis of glutamine to glutamate and ammonia as part of the biosynthesis of pyridoxal 5'-phosphate. The resulting ammonia molecule is channeled to the active site of PdxS. This chain is Pyridoxal 5'-phosphate synthase subunit PdxT, found in Thermobifida fusca (strain YX).